The primary structure comprises 187 residues: Homeobox expressed in ES cells 1-B (187 aa).

The homeobox DNA-binding region spans 110 to 169 (GRRPRTAFTRSQIEILENVFRVNSYPGIDVREELASKLALDEDRIQIWFQNRRAKLKRSH).

The protein belongs to the ANF homeobox family. As to quaternary structure, the N-terminus interacts with the LIM 2 domain of zyx. First expressed at a low level in the late blastula stage (stage 9) in most cells of the animal half of the embryo. Following this, predominantly expressed in two zones; the dorsal blastopore lip (Spemann organizer) at the beginning of gastrulation, and subsequently in the anterior part of the neural anlage (the region of future forebrain).

It localises to the nucleus. Regulates the earliest stages of development of the anterior neural plate. Plays a role in forebrain development by inhibiting the expression of otx2 and pax6 in the rostral region of the anterior neural plate. Necessary for both neural differentiation and neural patterning. Controls Spemann organizer development. May act as a transcriptional repressor. The chain is Homeobox expressed in ES cells 1-B (hesx1-b) from Xenopus laevis (African clawed frog).